The chain runs to 120 residues: Small ribosomal subunit protein eS17 (120 aa).

Belongs to the eukaryotic ribosomal protein eS17 family. In terms of assembly, component of the small ribosomal subunit.

The protein resides in the cytoplasm. This Encephalitozoon cuniculi (strain GB-M1) (Microsporidian parasite) protein is Small ribosomal subunit protein eS17 (RPS17).